Here is a 445-residue protein sequence, read N- to C-terminus: Probable aminotransferase TAT3 (445 aa).

This sequence belongs to the class-I pyridoxal-phosphate-dependent aminotransferase family. Pyridoxal 5'-phosphate serves as cofactor. Expressed in roots, leaves and cauline leaves.

The protein is Probable aminotransferase TAT3 (TAT3) of Arabidopsis thaliana (Mouse-ear cress).